The following is a 446-amino-acid chain: RUN domain-containing protein 3A (446 aa).

The tract at residues 1 to 298 is interaction with RAP2A; the sequence is MEASFVQTTM…LQLQLEEAAA (298 aa). The region spanning 52–189 is the RUN domain; that stretch reads DDSSEEFVNF…IDFSFCLKGE (138 aa). Residue Thr-215 is modified to Phosphothreonine. Residues 216–239 are disordered; sequence DEEERHSAESSTSEDNSPEHPYLP. Ser-232 carries the post-translational modification Phosphoserine. Residues 267 to 322 are a coiled coil; sequence YLEELVRLRESQLKDLEAENRRLQLQLEEAAAQNQREKRELEGVILELQEQLTGLI. The span at 372–384 shows a compositional bias: polar residues; the sequence is PLSAEASLSSDSQ. A disordered region spans residues 372–403; it reads PLSAEASLSSDSQRLGEAKRDEEPWGPIGKDP. Residues 385-394 are compositionally biased toward basic and acidic residues; the sequence is RLGEAKRDEE. Phosphoserine occurs at positions 416 and 419.

This sequence belongs to the RUNDC3 family. Interacts with the GTP-bound form of RAP2A. As to expression, brain.

Functionally, may act as an effector of RAP2A in neuronal cells. This Mus musculus (Mouse) protein is RUN domain-containing protein 3A (Rundc3a).